Consider the following 320-residue polypeptide: HPr kinase/phosphorylase (320 aa).

Residues histidine 141 and lysine 162 contribute to the active site. 156 to 163 (GHSGLGKS) contributes to the ATP binding site. Serine 163 serves as a coordination point for Mg(2+). Aspartate 180 functions as the Proton acceptor; for phosphorylation activity. Proton donor; for dephosphorylation activity in the catalytic mechanism. An important for the catalytic mechanism of both phosphorylation and dephosphorylation region spans residues 204–213 (LEVRGLGILN). A Mg(2+)-binding site is contributed by glutamate 205. The active site involves arginine 248. Residues 269–274 (PVAVGR) are important for the catalytic mechanism of dephosphorylation.

Belongs to the HPrK/P family. As to quaternary structure, homohexamer. The cofactor is Mg(2+).

The enzyme catalyses [HPr protein]-L-serine + ATP = [HPr protein]-O-phospho-L-serine + ADP + H(+). It carries out the reaction [HPr protein]-O-phospho-L-serine + phosphate + H(+) = [HPr protein]-L-serine + diphosphate. Functionally, catalyzes the ATP- as well as the pyrophosphate-dependent phosphorylation of a specific serine residue in HPr, a phosphocarrier protein of the phosphoenolpyruvate-dependent sugar phosphotransferase system (PTS). HprK/P also catalyzes the pyrophosphate-producing, inorganic phosphate-dependent dephosphorylation (phosphorolysis) of seryl-phosphorylated HPr (P-Ser-HPr). The sequence is that of HPr kinase/phosphorylase from Neisseria meningitidis serogroup A / serotype 4A (strain DSM 15465 / Z2491).